Here is a 344-residue protein sequence, read N- to C-terminus: Methionine import ATP-binding protein MetN (344 aa).

In terms of domain architecture, ABC transporter spans 7–245 (ISLKKISRCF…PQDDTTIAML (239 aa)). 42–49 (GRSGAGKS) provides a ligand contact to ATP.

The protein belongs to the ABC transporter superfamily. Methionine importer (TC 3.A.1.24) family. As to quaternary structure, the complex is composed of two ATP-binding proteins (MetN), two transmembrane proteins (MetI) and a solute-binding protein (MetQ).

The protein localises to the cell inner membrane. The catalysed reaction is L-methionine(out) + ATP + H2O = L-methionine(in) + ADP + phosphate + H(+). It carries out the reaction D-methionine(out) + ATP + H2O = D-methionine(in) + ADP + phosphate + H(+). Functionally, part of the ABC transporter complex MetNIQ involved in methionine import. Responsible for energy coupling to the transport system. The sequence is that of Methionine import ATP-binding protein MetN from Bartonella henselae (strain ATCC 49882 / DSM 28221 / CCUG 30454 / Houston 1) (Rochalimaea henselae).